The following is a 327-amino-acid chain: uncharacterized protein (327 aa).

Positions 1–24 are cleaved as a signal peptide; that stretch reads MAMACLCLANISWATVCANSTGVA.

It belongs to the fimbrial protein family.

It localises to the fimbrium. Part of the sfmACDHF fimbrial operon. Could contribute to adhesion to various surfaces in specific environmental niches. Increases adhesion to eukaryotic T24 bladder epithelial cells in the absence of fim genes. This is an uncharacterized protein from Escherichia coli (strain K12).